Reading from the N-terminus, the 315-residue chain is Ribosomal protein L11 methyltransferase (315 aa).

S-adenosyl-L-methionine contacts are provided by Thr163, Gly185, Asp207, and Asn249.

This sequence belongs to the methyltransferase superfamily. PrmA family.

It is found in the cytoplasm. The catalysed reaction is L-lysyl-[protein] + 3 S-adenosyl-L-methionine = N(6),N(6),N(6)-trimethyl-L-lysyl-[protein] + 3 S-adenosyl-L-homocysteine + 3 H(+). Methylates ribosomal protein L11. The sequence is that of Ribosomal protein L11 methyltransferase from Lactobacillus helveticus (strain DPC 4571).